We begin with the raw amino-acid sequence, 348 residues long: Protein RecA (348 aa).

Position 65 to 72 (65 to 72) interacts with ATP; it reads GPESSGKT. Over residues 326–336 the composition is skewed to basic and acidic residues; the sequence is LLTPAEEKPET. Positions 326–348 are disordered; the sequence is LLTPAEEKPETDAAPEIEENEEF. A compositionally biased stretch (acidic residues) spans 338 to 348; it reads AAPEIEENEEF.

Belongs to the RecA family.

It localises to the cytoplasm. Its function is as follows. Can catalyze the hydrolysis of ATP in the presence of single-stranded DNA, the ATP-dependent uptake of single-stranded DNA by duplex DNA, and the ATP-dependent hybridization of homologous single-stranded DNAs. It interacts with LexA causing its activation and leading to its autocatalytic cleavage. This chain is Protein RecA, found in Aliivibrio fischeri (strain ATCC 700601 / ES114) (Vibrio fischeri).